A 143-amino-acid chain; its full sequence is Small ribosomal subunit protein uS12 (143 aa).

Residues 1-19 are compositionally biased toward basic residues; it reads MGKPKGIRAARKLKTHRQA. Positions 1–21 are disordered; that stretch reads MGKPKGIRAARKLKTHRQAQR. Residue P62 is modified to Hydroxyproline.

This sequence belongs to the universal ribosomal protein uS12 family. In terms of assembly, component of the 40S small ribosomal subunit.

The protein resides in the cytoplasm. Its subcellular location is the cytosol. It localises to the rough endoplasmic reticulum. This is Small ribosomal subunit protein uS12 (rps-23) from Brugia malayi (Filarial nematode worm).